A 219-amino-acid polypeptide reads, in one-letter code: Ribose-5-phosphate isomerase A (219 aa).

Substrate-binding positions include 28-31 (TGST), 81-84 (DGAD), and 94-97 (KGGG). Glu103 serves as the catalytic Proton acceptor. A substrate-binding site is contributed by Lys121.

It belongs to the ribose 5-phosphate isomerase family. As to quaternary structure, homodimer.

The catalysed reaction is aldehydo-D-ribose 5-phosphate = D-ribulose 5-phosphate. The protein operates within carbohydrate degradation; pentose phosphate pathway; D-ribose 5-phosphate from D-ribulose 5-phosphate (non-oxidative stage): step 1/1. Functionally, catalyzes the reversible conversion of ribose-5-phosphate to ribulose 5-phosphate. The sequence is that of Ribose-5-phosphate isomerase A from Shewanella loihica (strain ATCC BAA-1088 / PV-4).